The sequence spans 130 residues: Glycine cleavage system H protein (130 aa).

In terms of domain architecture, Lipoyl-binding spans Thr24–Arg106. Residue Lys65 is modified to N6-lipoyllysine. Residues Asp111–Glu130 are disordered.

The protein belongs to the GcvH family. As to quaternary structure, the glycine cleavage system is composed of four proteins: P, T, L and H. It depends on (R)-lipoate as a cofactor.

Functionally, the glycine cleavage system catalyzes the degradation of glycine. The H protein shuttles the methylamine group of glycine from the P protein to the T protein. The chain is Glycine cleavage system H protein from Alkalilimnicola ehrlichii (strain ATCC BAA-1101 / DSM 17681 / MLHE-1).